The primary structure comprises 315 residues: Malate dehydrogenase (315 aa).

Residues 10 to 15 and Asp34 each bind NAD(+); that span reads GSGFTG. The substrate site is built by Arg85 and Arg91. Residues Asn98 and 121–123 contribute to the NAD(+) site; that span reads LTN. Residues Asn123 and Arg154 each coordinate substrate. Residue His178 is the Proton acceptor of the active site.

This sequence belongs to the LDH/MDH superfamily. MDH type 3 family.

It catalyses the reaction (S)-malate + NAD(+) = oxaloacetate + NADH + H(+). Catalyzes the reversible oxidation of malate to oxaloacetate. The chain is Malate dehydrogenase from Symbiobacterium thermophilum (strain DSM 24528 / JCM 14929 / IAM 14863 / T).